Here is a 220-residue protein sequence, read N- to C-terminus: Flavin-dependent thymidylate synthase (220 aa).

In terms of domain architecture, ThyX spans 1–208 (MKIDILDKGF…PWTFEAFLKY (208 aa)). Residues T55, 78-80 (RHR), and E86 each bind FAD. DUMP is bound by residues 75-78 (QWFR), 86-90 (ELSGR), and R147. The short motif at 78 to 88 (RHRIASYNELS) is the ThyX motif element. Residues 163–165 (NAR) and N169 each bind FAD. DUMP is bound at residue R174. R174 functions as the Involved in ionization of N3 of dUMP, leading to its activation in the catalytic mechanism.

The protein belongs to the thymidylate synthase ThyX family. In terms of assembly, homotetramer. The cofactor is FAD.

It carries out the reaction dUMP + (6R)-5,10-methylene-5,6,7,8-tetrahydrofolate + NADPH + H(+) = dTMP + (6S)-5,6,7,8-tetrahydrofolate + NADP(+). Its pathway is pyrimidine metabolism; dTTP biosynthesis. Catalyzes the reductive methylation of 2'-deoxyuridine-5'-monophosphate (dUMP) to 2'-deoxythymidine-5'-monophosphate (dTMP) while utilizing 5,10-methylenetetrahydrofolate (mTHF) as the methyl donor, and NADPH and FADH(2) as the reductant. This Thermotoga sp. (strain RQ2) protein is Flavin-dependent thymidylate synthase.